Reading from the N-terminus, the 145-residue chain is Maximins 5/H4 type 1 (145 aa).

The first 18 residues, 1–18 (MNFKYIVAVSFLIASAYA), serve as a signal peptide directing secretion. 2 propeptides span residues 19–43 (RSVQNDEQSLSQRDVLEEESLREIR) and 74–124 (TAEE…KEKR). Leucine amide is present on L144.

This sequence belongs to the bombinin family. As to expression, expressed by the skin glands.

It is found in the secreted. Maximin-5 shows antibacterial activity against both Gram-positive and Gram-negative bacteria. The only exception is the resistance of E.coli. Also shows antimicrobial activity against fungi C.albicans, A.flavus and P.uticale. It has little hemolytic activity. It does not possess a significant cytotoxicity against tumor cell lines. It does not possess a significant anti-HIV activity. Functionally, maximin-H4 shows antibacterial activity against both Gram-positive and Gram-negative bacteria. It also shows antimicrobial activity against the fungus C.albicans. Shows strong hemolytic activity. The sequence is that of Maximins 5/H4 type 1 from Bombina maxima (Giant fire-bellied toad).